We begin with the raw amino-acid sequence, 339 residues long: UDP-glucose 4-epimerase (339 aa).

NAD(+)-binding positions include 10-12 (GYI), 31-35 (DNLSN), 58-59 (DL), Phe-80, and Lys-84. Residue 124–126 (SAT) coordinates substrate. Catalysis depends on Tyr-148, which acts as the Proton acceptor. Residues Lys-152 and Tyr-176 each contribute to the NAD(+) site. Substrate contacts are provided by residues 176–178 (YFN), 197–199 (NNL), Arg-230, and 291–294 (RPGD).

This sequence belongs to the NAD(P)-dependent epimerase/dehydratase family. It depends on NAD(+) as a cofactor.

It catalyses the reaction UDP-alpha-D-glucose = UDP-alpha-D-galactose. The catalysed reaction is UDP-N-acetyl-alpha-D-glucosamine = UDP-N-acetyl-alpha-D-galactosamine. It functions in the pathway cell wall biogenesis; teichoic acid biosynthesis. In terms of biological role, catalyzes two distinct but analogous reactions: the reversible epimerization of UDP-glucose to UDP-galactose and the reversible epimerization of UDP-N-acetylglucosamine to UDP-N-acetylgalactosamine. The enzyme is more efficient in catalyzing the interconversion between unacetylated than between corresponding N-acetylated substrates. Essential for growth in media containing either glucose or galactose. May protect the cell from the toxic effects of galactose and glucose or derivatives of both sugars. Involved in the biosynthesis of teichoic acids via the formation of UDP-N-acetylgalactosamine. Influences cell division. The protein is UDP-glucose 4-epimerase of Bacillus subtilis (strain 168).